Here is an 88-residue protein sequence, read N- to C-terminus: Putative septation protein SpoVG (88 aa).

It belongs to the SpoVG family.

In terms of biological role, could be involved in septation. This Lachnospira eligens (strain ATCC 27750 / DSM 3376 / VPI C15-48 / C15-B4) (Eubacterium eligens) protein is Putative septation protein SpoVG.